The chain runs to 156 residues: Putative NrdI-like protein (156 aa).

The protein is Putative NrdI-like protein of Streptococcus pneumoniae (strain ATCC BAA-255 / R6).